Here is an 89-residue protein sequence, read N- to C-terminus: Small ribosomal subunit protein uS15 (89 aa).

This sequence belongs to the universal ribosomal protein uS15 family. In terms of assembly, part of the 30S ribosomal subunit. Forms a bridge to the 50S subunit in the 70S ribosome, contacting the 23S rRNA.

Its function is as follows. One of the primary rRNA binding proteins, it binds directly to 16S rRNA where it helps nucleate assembly of the platform of the 30S subunit by binding and bridging several RNA helices of the 16S rRNA. Functionally, forms an intersubunit bridge (bridge B4) with the 23S rRNA of the 50S subunit in the ribosome. The protein is Small ribosomal subunit protein uS15 of Bartonella quintana (strain Toulouse) (Rochalimaea quintana).